A 345-amino-acid chain; its full sequence is Adenine deaminase (345 aa).

Zn(2+)-binding residues include histidine 24, histidine 26, and histidine 204. Catalysis depends on glutamate 207, which acts as the Proton donor. Position 285 (aspartate 285) interacts with Zn(2+). Aspartate 286 contributes to the substrate binding site.

Belongs to the metallo-dependent hydrolases superfamily. Adenosine and AMP deaminases family. Adenine deaminase type 2 subfamily. It depends on Zn(2+) as a cofactor.

It catalyses the reaction adenine + H2O + H(+) = hypoxanthine + NH4(+). Its function is as follows. Catalyzes the hydrolytic deamination of adenine to hypoxanthine. Plays an important role in the purine salvage pathway and in nitrogen catabolism. The sequence is that of Adenine deaminase from Albidiferax ferrireducens (strain ATCC BAA-621 / DSM 15236 / T118) (Rhodoferax ferrireducens).